The following is a 417-amino-acid chain: Exodeoxyribonuclease 7 large subunit (417 aa).

Belongs to the XseA family. In terms of assembly, heterooligomer composed of large and small subunits.

Its subcellular location is the cytoplasm. The enzyme catalyses Exonucleolytic cleavage in either 5'- to 3'- or 3'- to 5'-direction to yield nucleoside 5'-phosphates.. Bidirectionally degrades single-stranded DNA into large acid-insoluble oligonucleotides, which are then degraded further into small acid-soluble oligonucleotides. The sequence is that of Exodeoxyribonuclease 7 large subunit from Corynebacterium glutamicum (strain ATCC 13032 / DSM 20300 / JCM 1318 / BCRC 11384 / CCUG 27702 / LMG 3730 / NBRC 12168 / NCIMB 10025 / NRRL B-2784 / 534).